Consider the following 380-residue polypeptide: Lipid-A-disaccharide synthase (380 aa).

The protein belongs to the LpxB family.

It carries out the reaction a lipid X + a UDP-2-N,3-O-bis[(3R)-3-hydroxyacyl]-alpha-D-glucosamine = a lipid A disaccharide + UDP + H(+). It participates in bacterial outer membrane biogenesis; LPS lipid A biosynthesis. Condensation of UDP-2,3-diacylglucosamine and 2,3-diacylglucosamine-1-phosphate to form lipid A disaccharide, a precursor of lipid A, a phosphorylated glycolipid that anchors the lipopolysaccharide to the outer membrane of the cell. In Pseudomonas syringae pv. tomato (strain ATCC BAA-871 / DC3000), this protein is Lipid-A-disaccharide synthase.